Here is a 63-residue protein sequence, read N- to C-terminus: Large ribosomal subunit protein bL28 (63 aa).

The protein belongs to the bacterial ribosomal protein bL28 family.

This Clostridium acetobutylicum (strain ATCC 824 / DSM 792 / JCM 1419 / IAM 19013 / LMG 5710 / NBRC 13948 / NRRL B-527 / VKM B-1787 / 2291 / W) protein is Large ribosomal subunit protein bL28.